Reading from the N-terminus, the 123-residue chain is Large ribosomal subunit protein uL29 (123 aa).

The residue at position 19 (K19) is an N6-acetyllysine. Residue K25 forms a Glycyl lysine isopeptide (Lys-Gly) (interchain with G-Cter in SUMO2) linkage. S29 carries the post-translational modification Phosphoserine. N6-acetyllysine is present on K43. A disordered region spans residues 100–123 (EKLKTKKQQRKERLYPLRKYAVKA).

Belongs to the universal ribosomal protein uL29 family. In terms of assembly, component of the large ribosomal subunit.

Its subcellular location is the cytoplasm. Functionally, component of the large ribosomal subunit. The ribosome is a large ribonucleoprotein complex responsible for the synthesis of proteins in the cell. The chain is Large ribosomal subunit protein uL29 (Rpl35) from Mus musculus (Mouse).